We begin with the raw amino-acid sequence, 414 residues long: Ribulose bisphosphate carboxylase large chain (414 aa).

Substrate contacts are provided by asparagine 100 and threonine 150. Lysine 152 serves as the catalytic Proton acceptor. Lysine 154 is a binding site for substrate. Lysine 178, aspartate 180, and glutamate 181 together coordinate Mg(2+). An N6-carboxylysine modification is found at lysine 178. Histidine 271 acts as the Proton acceptor in catalysis. Residues arginine 272, histidine 304, and serine 356 each contribute to the substrate site.

The protein belongs to the RuBisCO large chain family. Type I subfamily. As to quaternary structure, heterohexadecamer of 8 large chains and 8 small chains; disulfide-linked. The disulfide link is formed within the large subunit homodimers. Mg(2+) is required as a cofactor. Post-translationally, the disulfide bond which can form in the large chain dimeric partners within the hexadecamer appears to be associated with oxidative stress and protein turnover.

The protein localises to the plastid. Its subcellular location is the chloroplast. The enzyme catalyses 2 (2R)-3-phosphoglycerate + 2 H(+) = D-ribulose 1,5-bisphosphate + CO2 + H2O. It catalyses the reaction D-ribulose 1,5-bisphosphate + O2 = 2-phosphoglycolate + (2R)-3-phosphoglycerate + 2 H(+). RuBisCO catalyzes two reactions: the carboxylation of D-ribulose 1,5-bisphosphate, the primary event in carbon dioxide fixation, as well as the oxidative fragmentation of the pentose substrate in the photorespiration process. Both reactions occur simultaneously and in competition at the same active site. This chain is Ribulose bisphosphate carboxylase large chain (rbcL), found in Blechnopsis orientalis (Fish fern).